We begin with the raw amino-acid sequence, 308 residues long: Porphobilinogen deaminase (308 aa).

Cys-241 is subject to S-(dipyrrolylmethanemethyl)cysteine.

It belongs to the HMBS family. As to quaternary structure, monomer. Requires dipyrromethane as cofactor.

The enzyme catalyses 4 porphobilinogen + H2O = hydroxymethylbilane + 4 NH4(+). It functions in the pathway porphyrin-containing compound metabolism; protoporphyrin-IX biosynthesis; coproporphyrinogen-III from 5-aminolevulinate: step 2/4. In terms of biological role, tetrapolymerization of the monopyrrole PBG into the hydroxymethylbilane pre-uroporphyrinogen in several discrete steps. The sequence is that of Porphobilinogen deaminase from Staphylococcus carnosus (strain TM300).